We begin with the raw amino-acid sequence, 135 residues long: Histone H1, macronuclear (135 aa).

Over residues 1-17 the composition is skewed to low complexity; that stretch reads MPAKTATAVKRTTTTKK. The interval 1–135 is disordered; sequence MPAKTATAVK…GGKKKSAKKN (135 aa). Composition is skewed to basic residues over residues 18-54 and 62-79; these read SAAK…RRTP and KATK…RSAT. The segment covering 80-112 has biased composition (low complexity); that stretch reads KKTTAAPAAAAAPATDAPAAAATPSKATGSAKK. Over residues 113–135 the composition is skewed to basic residues; sequence ASARKSSAKKPAKGGKKKSAKKN.

The protein resides in the nucleus. Its subcellular location is the chromosome. Its function is as follows. Histones H1 are necessary for the condensation of nucleosome chains into higher-order structures. The polypeptide is Histone H1, macronuclear (Euplotes eurystomus (Ciliate)).